An 812-amino-acid polypeptide reads, in one-letter code: Valine--tRNA ligase (812 aa).

A 'HIGH' region motif is present at residues 46–56 (PTVSGQLHIGH). The 'KMSKS' region signature appears at 536–540 (KMSKS). An ATP-binding site is contributed by lysine 539.

Belongs to the class-I aminoacyl-tRNA synthetase family. ValS type 2 subfamily. As to quaternary structure, monomer.

It is found in the cytoplasm. It catalyses the reaction tRNA(Val) + L-valine + ATP = L-valyl-tRNA(Val) + AMP + diphosphate. Its function is as follows. Catalyzes the attachment of valine to tRNA(Val). As ValRS can inadvertently accommodate and process structurally similar amino acids such as threonine, to avoid such errors, it has a 'posttransfer' editing activity that hydrolyzes mischarged Thr-tRNA(Val) in a tRNA-dependent manner. This Rickettsia rickettsii (strain Iowa) protein is Valine--tRNA ligase.